Reading from the N-terminus, the 417-residue chain is Echinulin prenyltransferase 1 (417 aa).

8 residues coordinate dimethylallyl diphosphate: Arg90, Lys179, Tyr181, Lys248, Tyr250, Tyr333, Tyr398, and Tyr402.

Belongs to the tryptophan dimethylallyltransferase family.

The catalysed reaction is cyclo(L-tryptophyl-L-alanyl) + dimethylallyl diphosphate = preechinulin + diphosphate. Its pathway is secondary metabolite biosynthesis. The protein operates within alkaloid biosynthesis. Prenyltransferase; part of the gene cluster that mediates the biosynthesis of echinulin family alkaloid. The pathway begins with the biosynthesis of the cyclic dipeptide cyclo-L-Trp-L-Ala (cyclo-TA) by the NRPS echPS via condensation of L-alanine and L-tryptophan. The prenyltransferase echPT1 then catalyzes the first prenylation step, a reverse prenylation reaction at C2, to yield preechinulin. Preechinulin is the substrate of the cytochrome P450 monooxygenase echP450 that catalyzes the formation of the double bond between C10 and C11 to produce neoechulin A. The unique prenyltransferase echPT2 functions as a competitive enzyme with echP450 for preechinulin metabolization and uses preechinulin for effective regiospecific prenylations. Preechinulin is prenylated by echPT2 at C5 or C7. C7-prenylation leads to accumulation of tardioxopiperazine B without further modification by echPT2. In contrast, the C5-prenylated tardioxopiperazine A can be prenylated again by echPT2, predominantly at C7 to form echinulin or less frequently at C4 to give variecolorin L. EchPT2 also accepts neoechilunin A to produce varlecolorin G (prenylation at C5) or isoechinulin A (prenylation at C7). EchPT2 further converts isoechinulin A into dehydroechinulin. Moreover, a yet unidentified enzyme can also convert neoechilunin A into neoechilunin B by introducing a double bond between positions C14 and C17 and thus provides a further substrate to echPT2 for C5 and C7 prenylation. The polypeptide is Echinulin prenyltransferase 1 (Aspergillus ruber (Eurotium rubrum)).